We begin with the raw amino-acid sequence, 462 residues long: Cysteine--tRNA ligase (462 aa).

Cys-24 lines the Zn(2+) pocket. The 'HIGH' region signature appears at 26 to 36 (PTVYDDAHLGH). Residues Cys-199, His-224, and Glu-228 each contribute to the Zn(2+) site. The 'KMSKS' region signature appears at 256–260 (KMSKS). ATP is bound at residue Lys-259.

Belongs to the class-I aminoacyl-tRNA synthetase family. Monomer. Requires Zn(2+) as cofactor.

Its subcellular location is the cytoplasm. The catalysed reaction is tRNA(Cys) + L-cysteine + ATP = L-cysteinyl-tRNA(Cys) + AMP + diphosphate. The sequence is that of Cysteine--tRNA ligase from Campylobacter jejuni subsp. jejuni serotype O:6 (strain 81116 / NCTC 11828).